Reading from the N-terminus, the 145-residue chain is 5-hydroxymethyl-dUMP N-hydrolase (145 aa).

The 5-hydroxymethyl-dUMP site is built by G7, I9, R10, G11, S79, G81, E85, and S109.

Belongs to the 2'-deoxynucleoside 5'-phosphate N-hydrolase 1 family. As to quaternary structure, monomer and homodimer.

Its subcellular location is the cytoplasm. It is found in the nucleus. It catalyses the reaction 5-hydroxymethyl-dUMP + H2O = 5-hydroxymethyluracil + 2-deoxy-D-ribose 5-phosphate. Functionally, part of a nucleotide salvage pathway that eliminates epigenetically modified 5-hydroxymethyl-dCMP (hmdCMP) in a two-step process entailing deamination to cytotoxic 5-hydroxymethyl-dUMP (hmdUMP), followed by its hydrolysis into 5-hydroxymethyluracil (hmU) and 2-deoxy-D-ribose 5-phosphate (deoxyribosephosphate). Catalyzes the second step in that pathway, the hydrolysis of the N-glycosidic bond in hmdUMP, degrading this cytotoxic nucleotide to avoid its genomic integration. The chain is 5-hydroxymethyl-dUMP N-hydrolase from Esox lucius (Northern pike).